Here is a 237-residue protein sequence, read N- to C-terminus: Terpene cyclase spyD (237 aa).

Transmembrane regions (helical) follow at residues isoleucine 17–valine 37, alanine 47–tyrosine 67, tyrosine 71–glycine 91, histidine 109–alanine 129, isoleucine 138–leucine 158, serine 167–leucine 187, and tryptophan 206–glycine 226.

Belongs to the paxB family.

The protein localises to the membrane. The catalysed reaction is (S)-(2E,6E,10E)-epoxygeranylgeranyl-triacetate lactone = sartorypyrone F. The enzyme catalyses (S)-(2E,6E,10E)-epoxygeranylgeranyl-triacetate lactone = sartorypyrone D. It participates in secondary metabolite biosynthesis; terpenoid biosynthesis. Terpene cyclase; part of the gene cluster that mediates the biosynthesis of meroterpenoids called sartorypyrones. Within the pathway, spyD catalyzes the cyclization of epoxygeranylgeranyl-triacetate lactone. SpyD exhibits promiscuous activity, resulting in the formation of bicyclic sartorypyrone F and monocyclic sartorypyrone D. The biosynthesis of sartorypyrones begins with the production of triacetic acid lactone (TAL) by the NR-PKS spyA using one molecule of acetyl-CoA and two molecules of malonyl-CoA. The prenyltransferase spyF then conjugates geranylgeranyl pyrophosphate (GGPP) to TAL to form geranylgeranyl-triacetate lactone, for which the pathway-specific geranylgeranyl pyrophosphate synthase (GGPS) spyE is required to provide GGPP. Subsequently, geranylgeranyl-triacetate lactone is epoxidized at the terminal olein by the FAD-dependent monooxygenase spyC, followed by cyclization of the terpenoid component catalyzed by the terpene cyclase spyD to produce both the bicyclic sartorypyrone F and the monocyclic sartorypyrone D. Finally, the last step of the biosynthesis involves the acetylation of the meroterpenoids sartorypyrones D and F by the acetyltransferase SpyB to produce sartorypyrones A and G, respectively. The protein is Terpene cyclase spyD of Aspergillus fumigatus (strain ATCC MYA-4609 / CBS 101355 / FGSC A1100 / Af293) (Neosartorya fumigata).